We begin with the raw amino-acid sequence, 179 residues long: Small ribosomal subunit protein uS5 (179 aa).

In terms of domain architecture, S5 DRBM spans 13-76; the sequence is LDERVVLINR…EAAKRNLIRV (64 aa). The tract at residues 160–179 is disordered; the sequence is DMTPQELNARRMRRETTEAA.

This sequence belongs to the universal ribosomal protein uS5 family. Part of the 30S ribosomal subunit. Contacts proteins S4 and S8.

In terms of biological role, with S4 and S12 plays an important role in translational accuracy. Located at the back of the 30S subunit body where it stabilizes the conformation of the head with respect to the body. This chain is Small ribosomal subunit protein uS5, found in Chloroflexus aggregans (strain MD-66 / DSM 9485).